Here is a 334-residue protein sequence, read N- to C-terminus: Glycerol-3-phosphate dehydrogenase [NAD(P)+] (334 aa).

Residues serine 14, tyrosine 15, histidine 35, and lysine 109 each coordinate NADPH. 3 residues coordinate sn-glycerol 3-phosphate: lysine 109, glycine 138, and threonine 140. NADPH is bound at residue alanine 142. Residues lysine 194, aspartate 247, serine 257, arginine 258, and asparagine 259 each coordinate sn-glycerol 3-phosphate. Lysine 194 serves as the catalytic Proton acceptor. Arginine 258 contacts NADPH. 2 residues coordinate NADPH: valine 282 and glutamate 284.

This sequence belongs to the NAD-dependent glycerol-3-phosphate dehydrogenase family.

It is found in the cytoplasm. It carries out the reaction sn-glycerol 3-phosphate + NAD(+) = dihydroxyacetone phosphate + NADH + H(+). It catalyses the reaction sn-glycerol 3-phosphate + NADP(+) = dihydroxyacetone phosphate + NADPH + H(+). It functions in the pathway membrane lipid metabolism; glycerophospholipid metabolism. In terms of biological role, catalyzes the reduction of the glycolytic intermediate dihydroxyacetone phosphate (DHAP) to sn-glycerol 3-phosphate (G3P), the key precursor for phospholipid synthesis. This chain is Glycerol-3-phosphate dehydrogenase [NAD(P)+], found in Psychromonas ingrahamii (strain DSM 17664 / CCUG 51855 / 37).